The primary structure comprises 621 residues: tRNA uridine 5-carboxymethylaminomethyl modification enzyme MnmG (621 aa).

Gly-9 to Gly-14 lines the FAD pocket. Gly-270 to Phe-284 contacts NAD(+).

Belongs to the MnmG family. Homodimer. Heterotetramer of two MnmE and two MnmG subunits. FAD is required as a cofactor.

Its subcellular location is the cytoplasm. Functionally, NAD-binding protein involved in the addition of a carboxymethylaminomethyl (cmnm) group at the wobble position (U34) of certain tRNAs, forming tRNA-cmnm(5)s(2)U34. The chain is tRNA uridine 5-carboxymethylaminomethyl modification enzyme MnmG from Borrelia garinii subsp. bavariensis (strain ATCC BAA-2496 / DSM 23469 / PBi) (Borreliella bavariensis).